Consider the following 162-residue polypeptide: Cytochrome c-type biogenesis protein CcmE (162 aa).

Topologically, residues 1–7 (MTRKQRR) are cytoplasmic. The chain crosses the membrane as a helical; Signal-anchor for type II membrane protein span at residues 8–28 (LTMIGGALVVLGIAAALVLNA). Residues 29 to 162 (LRDSIVFFST…EASSKQEVSQ (134 aa)) lie on the Periplasmic side of the membrane. 2 residues coordinate heme: His122 and Tyr126. The disordered stretch occupies residues 140–162 (HWKDDYGAQPGAAEASSKQEVSQ).

This sequence belongs to the CcmE/CycJ family.

The protein resides in the cell inner membrane. In terms of biological role, heme chaperone required for the biogenesis of c-type cytochromes. Transiently binds heme delivered by CcmC and transfers the heme to apo-cytochromes in a process facilitated by CcmF and CcmH. The polypeptide is Cytochrome c-type biogenesis protein CcmE (Nitrobacter winogradskyi (strain ATCC 25391 / DSM 10237 / CIP 104748 / NCIMB 11846 / Nb-255)).